We begin with the raw amino-acid sequence, 117 residues long: Immunoglobulin kappa variable 1D-16 (117 aa).

The signal sequence occupies residues 1 to 22 (MDMRVLAQLLGLLLLCFPGARC). The framework-1 stretch occupies residues 23-45 (DIQMTQSPSSLSASVGDRVTITC). The Ig-like domain maps to 24-117 (IQMTQSPSSL…YYCQQYNSYP (94 aa)). A disulfide bridge links C45 with C110. The tract at residues 46–56 (RASQGISSWLA) is complementarity-determining-1. The tract at residues 57–71 (WYQQKPEKAPKSLIY) is framework-2. Residues 72-78 (AASSLQS) form a complementarity-determining-2 region. The segment at 79 to 110 (GVPSRFSGSGSGTDFTLTISSLQPEDFATYYC) is framework-3. The complementarity-determining-3 stretch occupies residues 111-117 (QQYNSYP).

In terms of assembly, immunoglobulins are composed of two identical heavy chains and two identical light chains; disulfide-linked.

It localises to the secreted. The protein localises to the cell membrane. Functionally, v region of the variable domain of immunoglobulin light chains that participates in the antigen recognition. Immunoglobulins, also known as antibodies, are membrane-bound or secreted glycoproteins produced by B lymphocytes. In the recognition phase of humoral immunity, the membrane-bound immunoglobulins serve as receptors which, upon binding of a specific antigen, trigger the clonal expansion and differentiation of B lymphocytes into immunoglobulins-secreting plasma cells. Secreted immunoglobulins mediate the effector phase of humoral immunity, which results in the elimination of bound antigens. The antigen binding site is formed by the variable domain of one heavy chain, together with that of its associated light chain. Thus, each immunoglobulin has two antigen binding sites with remarkable affinity for a particular antigen. The variable domains are assembled by a process called V-(D)-J rearrangement and can then be subjected to somatic hypermutations which, after exposure to antigen and selection, allow affinity maturation for a particular antigen. The protein is Immunoglobulin kappa variable 1D-16 of Homo sapiens (Human).